Here is a 295-residue protein sequence, read N- to C-terminus: Phosphonoacetaldehyde hydrolase (295 aa).

Asp-36 (nucleophile) is an active-site residue. Mg(2+)-binding residues include Asp-36 and Ala-38. Lys-78 serves as the catalytic Schiff-base intermediate with substrate. Residue Asp-212 coordinates Mg(2+).

The protein belongs to the HAD-like hydrolase superfamily. PhnX family. In terms of assembly, homodimer. Requires Mg(2+) as cofactor.

The catalysed reaction is phosphonoacetaldehyde + H2O = acetaldehyde + phosphate + H(+). In terms of biological role, involved in phosphonate degradation. This Psychromonas ingrahamii (strain DSM 17664 / CCUG 51855 / 37) protein is Phosphonoacetaldehyde hydrolase.